Here is a 180-residue protein sequence, read N- to C-terminus: MYKVLAGVGSIVRTLWMVFTHITRKRDTILYPEVPAEEIVPPRYRGRIVLTRDPDGEERCVACNLCAVACPVGCISLQKAEKEDGRWYPEFFRINFSRCIFCGMCEEACPTTAIQMTPDFELGEYVRQDLVYEKENLLISGPGKYPDYNFYRVAGMAIDGKEKGQAQKESAPIDVRSLLP.

4Fe-4S ferredoxin-type domains follow at residues 50–80 (LTRDPDGEERCVACNLCAVACPVGCISLQKA) and 90–119 (EFFRINFSRCIFCGMCEEACPTTAIQMTPD). The [4Fe-4S] cluster site is built by cysteine 60, cysteine 63, cysteine 66, cysteine 70, cysteine 99, cysteine 102, cysteine 105, and cysteine 109.

It belongs to the complex I 23 kDa subunit family. As to quaternary structure, NDH-1 is composed of 14 different subunits. Subunits NuoA, H, J, K, L, M, N constitute the membrane sector of the complex. The cofactor is [4Fe-4S] cluster.

The protein localises to the cell inner membrane. The enzyme catalyses a quinone + NADH + 5 H(+)(in) = a quinol + NAD(+) + 4 H(+)(out). NDH-1 shuttles electrons from NADH, via FMN and iron-sulfur (Fe-S) centers, to quinones in the respiratory chain. The immediate electron acceptor for the enzyme in this species is believed to be ubiquinone. Couples the redox reaction to proton translocation (for every two electrons transferred, four hydrogen ions are translocated across the cytoplasmic membrane), and thus conserves the redox energy in a proton gradient. This chain is NADH-quinone oxidoreductase subunit I, found in Acinetobacter baylyi (strain ATCC 33305 / BD413 / ADP1).